The following is a 209-amino-acid chain: Guanylate kinase (209 aa).

One can recognise a Guanylate kinase-like domain in the interval 16 to 198 (GRLVIISGPS…AVTEICQILL (183 aa)). Position 23–30 (23–30 (GPSGAGKS)) interacts with ATP.

It belongs to the guanylate kinase family.

It localises to the cytoplasm. The enzyme catalyses GMP + ATP = GDP + ADP. Its function is as follows. Essential for recycling GMP and indirectly, cGMP. This chain is Guanylate kinase, found in Rhodopirellula baltica (strain DSM 10527 / NCIMB 13988 / SH1).